Reading from the N-terminus, the 416-residue chain is 3-oxoacyl-[acyl-carrier-protein] synthase 1 (416 aa).

Residues 11–415 (FPSVVVTAVT…GHNVALAFGR (405 aa)) enclose the Ketosynthase family 3 (KS3) domain. Residues cysteine 171, histidine 311, and histidine 345 each act as for beta-ketoacyl synthase activity in the active site. 2 residues coordinate substrate: histidine 311 and histidine 345.

The protein belongs to the thiolase-like superfamily. Beta-ketoacyl-ACP synthases family.

Its subcellular location is the cytoplasm. It carries out the reaction an ultra-long-chain mono-unsaturated fatty acyl-[ACP] + malonyl-[ACP] + H(+) = a 3-oxo-ultra-long-chain mono-unsaturated fatty acyl-[ACP] + holo-[ACP] + CO2. Its pathway is lipid metabolism; mycolic acid biosynthesis. Its function is as follows. Part of the mycobacterial fatty acid elongation system FAS-II, which is involved in mycolic acid biosynthesis. Catalyzes the elongation of long chain acyl-ACP substrates by the addition of two carbons from malonyl-ACP to an acyl acceptor. Involved in the initial extension of the mycolate chain and forms monounsaturated fatty acids that averaged 40 carbons in length. This chain is 3-oxoacyl-[acyl-carrier-protein] synthase 1 (kasA), found in Mycobacterium tuberculosis (strain ATCC 35801 / TMC 107 / Erdman).